The following is a 127-amino-acid chain: Small ribosomal subunit protein uS11 (127 aa).

It belongs to the universal ribosomal protein uS11 family. As to quaternary structure, part of the 30S ribosomal subunit. Interacts with proteins S7 and S18. Binds to IF-3.

Its function is as follows. Located on the platform of the 30S subunit, it bridges several disparate RNA helices of the 16S rRNA. Forms part of the Shine-Dalgarno cleft in the 70S ribosome. The chain is Small ribosomal subunit protein uS11 from Chlorobium phaeobacteroides (strain BS1).